The primary structure comprises 210 residues: Redox-sensing transcriptional repressor Rex (210 aa).

Positions 16-55 (IYSRYLRQLIEEGVETVSSGEIAAGVGVSSAQVRKDLAYF) form a DNA-binding region, H-T-H motif. Residue 90 to 95 (GAGKLG) coordinates NAD(+).

The protein belongs to the transcriptional regulatory Rex family. As to quaternary structure, homodimer.

The protein resides in the cytoplasm. In terms of biological role, modulates transcription in response to changes in cellular NADH/NAD(+) redox state. The protein is Redox-sensing transcriptional repressor Rex of Syntrophomonas wolfei subsp. wolfei (strain DSM 2245B / Goettingen).